Consider the following 138-residue polypeptide: Oleosin G (138 aa).

A run of 3 helical transmembrane segments spans residues 14-34 (ILGFITLFVSGAVLLFLTGLT), 48-68 (VLIFFSPILIPLATVLFVAVA), and 69-89 (GFLSAGGFGLAALSAISWLYN). The Proline-knot signature appears at 47–58 (PVLIFFSPILIP).

This sequence belongs to the oleosin family. As to expression, expressed in megagametophytes (at protein level).

Its subcellular location is the lipid droplet. It is found in the membrane. In Pinus massoniana (Chinese red pine), this protein is Oleosin G.